Consider the following 271-residue polypeptide: uncharacterized protein (271 aa).

3 consecutive transmembrane segments (helical) span residues 11–33 (GWLA…LAPW), 172–194 (SINT…LQLI), and 214–236 (FLSY…GYFA). The interval 245–271 (REKAGSPPPDKPMTVEQKLADRYGRRR) is disordered. The span at 262–271 (KLADRYGRRR) shows a compositional bias: basic and acidic residues.

Belongs to the SURF1 family.

The protein resides in the cell membrane. This is an uncharacterized protein from Mycobacterium tuberculosis (strain CDC 1551 / Oshkosh).